Reading from the N-terminus, the 533-residue chain is Death domain-containing ATP nucleosidase (533 aa).

The segment at 1-262 is death domain; the sequence is MDAAAIISLL…TAAGKEEKVS (262 aa). Residues 184–248 form a disordered region; it reads STFVSDDATQ…TQTSTNSFNS (65 aa). Positions 218–227 are enriched in polar residues; it reads PSAQVNQPPT. Low complexity predominate over residues 236 to 248; that stretch reads SGSTQTSTNSFNS. Residues 263-533 are purine nucleoside phosphorylase domain; sequence DDVTKGIKFL…HLDDDRTIHM (271 aa).

The catalysed reaction is ATP + H2O = D-ribose 5-triphosphate + adenine. The enzyme catalyses dATP + H2O = 2-deoxyribose 5-triphosphate + adenine. Its function is as follows. The C-terminal purine nucleoside phosphorylase (PNP) domain cleaves the N-glycosidic bond of ATP, and to a lesser extent dATP, to release adenine and a sugar triphosphate; has weak activity on ADP and AMP and no activity on dADP, dAMP, adenosine, deoxyadenosine or other (d)NTPs. The protein is Death domain-containing ATP nucleosidase (109585858) of Amphimedon queenslandica (Sponge).